A 324-amino-acid chain; its full sequence is Methionyl-tRNA formyltransferase (324 aa).

Position 114–117 (114–117) interacts with (6S)-5,6,7,8-tetrahydrofolate; the sequence is SLLP.

It belongs to the Fmt family.

It catalyses the reaction L-methionyl-tRNA(fMet) + (6R)-10-formyltetrahydrofolate = N-formyl-L-methionyl-tRNA(fMet) + (6S)-5,6,7,8-tetrahydrofolate + H(+). Functionally, attaches a formyl group to the free amino group of methionyl-tRNA(fMet). The formyl group appears to play a dual role in the initiator identity of N-formylmethionyl-tRNA by promoting its recognition by IF2 and preventing the misappropriation of this tRNA by the elongation apparatus. In Parabacteroides distasonis (strain ATCC 8503 / DSM 20701 / CIP 104284 / JCM 5825 / NCTC 11152), this protein is Methionyl-tRNA formyltransferase.